We begin with the raw amino-acid sequence, 415 residues long: ORC1-type DNA replication protein 2 (415 aa).

Residues Thr69 to Val73, Tyr215, and Arg227 each bind ATP.

The protein belongs to the CDC6/cdc18 family.

Functionally, involved in regulation of DNA replication. The chain is ORC1-type DNA replication protein 2 (cdc6-2) from Sulfolobus acidocaldarius (strain ATCC 33909 / DSM 639 / JCM 8929 / NBRC 15157 / NCIMB 11770).